The primary structure comprises 290 residues: Membrane protein insertase YidC (290 aa).

A signal peptide spans 1 to 19 (MKKKALLPLFLGIMVFLAG). C20 carries N-palmitoyl cysteine lipidation. C20 carries the S-diacylglycerol cysteine lipid modification. 5 consecutive transmembrane segments (helical) span residues 56–76 (YGLAIIILVLVIRIILLPFML), 134–154 (MLGCLPMLIQLPIIMGLYFVL), 176–196 (PDIWITIIAGVLYFIQAYVSS), 207–224 (GYMMMVISPIMIIWISLS), and 229–251 (LGLYWSVSAAFLVVQTHFANIYY). A disordered region spans residues 270 to 290 (HNGGSNKKGKNTQVVSKKKKK).

This sequence belongs to the OXA1/ALB3/YidC family. Type 2 subfamily.

The protein localises to the cell membrane. Functionally, required for the insertion and/or proper folding and/or complex formation of integral membrane proteins into the membrane. Involved in integration of membrane proteins that insert both dependently and independently of the Sec translocase complex, as well as at least some lipoproteins. The chain is Membrane protein insertase YidC from Staphylococcus aureus (strain Mu3 / ATCC 700698).